The primary structure comprises 4423 residues: Nonribosomal peptide synthetase 7 (4423 aa).

Residues 572 to 986 are condensation 1; that stretch reads NIYPCTSIQE…LISQDDKNRI (415 aa). The adenylation 1 stretch occupies residues 1007–1404; it reads ERIQKQPSAV…GRRDTQVKIR (398 aa). The Carrier 1 domain occupies 1533–1609; it reads LPLTETEQKL…DLARTIDERN (77 aa). Serine 1570 is modified (O-(pantetheine 4'-phosphoryl)serine). The segment at 1657–2066 is condensation 2; that stretch reads EDVYPCTSLQ…QFLDETHHET (410 aa). Residues 2102–2499 form an adenylation 2 region; that stretch reads RDVAKEQPDS…YIGRMGSEVK (398 aa). The Carrier 2 domain maps to 2642 to 2718; the sequence is VPQTRIGKKL…DCARILEADQ (77 aa). Serine 2679 is modified (O-(pantetheine 4'-phosphoryl)serine). Residues 2764–3170 are condensation 3; the sequence is EDVYPCTPMQ…AASASSDDQT (407 aa). The adenylation 3 stretch occupies residues 3205–3609; that stretch reads RSLETRPDSQ…GRGDSQIKIR (405 aa). Residues 3731-3804 enclose the Carrier 3 domain; it reads TESEYITRTL…KMAVVAQHQT (74 aa). The residue at position 3765 (serine 3765) is an O-(pantetheine 4'-phosphoryl)serine. Residues 3875–4278 are condensation 4; it reads TFVLDAEGDL…SQDEKLALLG (404 aa). The segment covering 4288-4300 has biased composition (polar residues); it reads KLTKLQRVNSPKE. The interval 4288–4312 is disordered; sequence KLTKLQRVNSPKEQTLRKDKPTNGV.

This sequence belongs to the NRP synthetase family.

It participates in secondary metabolite biosynthesis. Its function is as follows. Nonribosomal peptide synthetase; part of the gene cluster that mediates the biosynthesis of the lipopeptide fusaristatin A. Fusaristatin A consists of a polyketide chain linked to three amino acid residues glutamine (Gln), dehydroalanine (dehydro-Ala), and beta-aminoisobutyric acid. The biosynthesis starts with formation of a linear polyketide chain by the highly reducing polyketide synthase PKS6. The gene cluster does not contain an acyl-CoA ligase or an acyl-transferase, and it is therefore predicted that the polyketide is transferred directly to the nonribosomal peptide synthetase NRPS7. Modules 1-3 from NRPS7 incorporate dehydro-Ala, Gln, and beta-aminoisobutyric acid in the compound, which is released by cyclization. The beta-aminoisobutyric acid units are most likely not freely available to the NRPS, but can be synthesized from thymine, which requires a dehydrogenase, a monooxygenase, and an aminotransferase. The fusaristatin A cluster contains a cytochrome P450 monooxygenase (FGSG_08207) and an aminotransferase (FGSG_17085), which theoretically can perform two of the enzymatic steps. The enzymes may however also be involved in biosynthesis of dehydroalanine or modification of the polyketide. The dehydro-Ala residue can be a result of cyclization, where serine is dehydrated. The last gene of the cluster encodes a protein with an A/B barrel domain found in variable enzymes, which hampers functional prediction. The protein is Nonribosomal peptide synthetase 7 of Gibberella zeae (strain ATCC MYA-4620 / CBS 123657 / FGSC 9075 / NRRL 31084 / PH-1) (Wheat head blight fungus).